The primary structure comprises 532 residues: Glutamate--cysteine ligase (532 aa).

This sequence belongs to the glutamate--cysteine ligase type 1 family. Type 1 subfamily.

It catalyses the reaction L-cysteine + L-glutamate + ATP = gamma-L-glutamyl-L-cysteine + ADP + phosphate + H(+). The protein operates within sulfur metabolism; glutathione biosynthesis; glutathione from L-cysteine and L-glutamate: step 1/2. The sequence is that of Glutamate--cysteine ligase from Pseudomonas fluorescens (strain ATCC BAA-477 / NRRL B-23932 / Pf-5).